The primary structure comprises 212 residues: Golgi-associated RAB2 interactor protein 5A (212 aa).

2 disordered regions span residues 1–21 and 162–212; these read MKGGRDLKAARGGADRPLAPA and PFTH…LWGL. The span at 169–185 shows a compositional bias: acidic residues; it reads APEEEEEEEEEEEEEEV.

This sequence belongs to the GARIN family. As to quaternary structure, interacts (via N-terminus) with RAB2B (in GTP-bound form). As to expression, expressed in testis (at protein level).

It is found in the golgi apparatus. RAB2B effector protein which promotes cytosolic DNA-induced innate immune responses. Regulates IFN responses against DNA viruses by regulating the CGAS-STING signaling axis. The chain is Golgi-associated RAB2 interactor protein 5A from Mus musculus (Mouse).